A 474-amino-acid polypeptide reads, in one-letter code: Pyruvate kinase (474 aa).

Arginine 33 is a binding site for substrate. 3 residues coordinate K(+): asparagine 35, serine 37, and aspartate 67. Residue 35–38 (NFSH) participates in ATP binding. ATP-binding residues include arginine 74 and lysine 155. Glutamate 220 is a binding site for Mg(2+). Residues glycine 243, aspartate 244, and threonine 276 each coordinate substrate. Aspartate 244 provides a ligand contact to Mg(2+).

The protein belongs to the pyruvate kinase family. In terms of assembly, homotetramer. Requires Mg(2+) as cofactor. K(+) is required as a cofactor.

It carries out the reaction pyruvate + ATP = phosphoenolpyruvate + ADP + H(+). It participates in carbohydrate degradation; glycolysis; pyruvate from D-glyceraldehyde 3-phosphate: step 5/5. The sequence is that of Pyruvate kinase (pyk) from Corynebacterium efficiens (strain DSM 44549 / YS-314 / AJ 12310 / JCM 11189 / NBRC 100395).